A 337-amino-acid polypeptide reads, in one-letter code: Glyceraldehyde-3-phosphate dehydrogenase 3 (337 aa).

Residues 12 to 13 (RM) and Lys-80 each bind NAD(+). D-glyceraldehyde 3-phosphate is bound by residues 152–154 (SCT) and Thr-183. The Nucleophile role is filled by Cys-153. Residue Asn-184 coordinates NAD(+). D-glyceraldehyde 3-phosphate is bound by residues Arg-198, 211 to 212 (TG), and Arg-234. Position 317 (Asn-317) interacts with NAD(+).

The protein belongs to the glyceraldehyde-3-phosphate dehydrogenase family. As to quaternary structure, homotetramer.

It is found in the cytoplasm. It catalyses the reaction D-glyceraldehyde 3-phosphate + phosphate + NAD(+) = (2R)-3-phospho-glyceroyl phosphate + NADH + H(+). It functions in the pathway carbohydrate degradation; glycolysis; pyruvate from D-glyceraldehyde 3-phosphate: step 1/5. Its pathway is carbohydrate biosynthesis; gluconeogenesis. Catalyzes the oxidative phosphorylation of glyceraldehyde 3-phosphate (G3P) to 1,3-bisphosphoglycerate (BPG) using the cofactor NAD. The first reaction step involves the formation of a hemiacetal intermediate between G3P and a cysteine residue, and this hemiacetal intermediate is then oxidized to a thioester, with concomitant reduction of NAD to NADH. The reduced NADH is then exchanged with the second NAD, and the thioester is attacked by a nucleophilic inorganic phosphate to produce BPG. This chain is Glyceraldehyde-3-phosphate dehydrogenase 3 (gap3), found in Nostoc sp. (strain PCC 7120 / SAG 25.82 / UTEX 2576).